The primary structure comprises 89 residues: uncharacterized protein (89 aa).

To M.tuberculosis Rv3402c.

This is an uncharacterized protein from Mycobacterium tuberculosis (strain CDC 1551 / Oshkosh).